The chain runs to 279 residues: Energy-coupling factor transporter ATP-binding protein EcfA1 (279 aa).

The 236-residue stretch at 5–240 (IELKKVTFNY…GDELLQLGLD (236 aa)) folds into the ABC transporter domain. 40 to 47 (GHNGSGKS) contributes to the ATP binding site.

The protein belongs to the ABC transporter superfamily. Energy-coupling factor EcfA family. As to quaternary structure, forms a stable energy-coupling factor (ECF) transporter complex composed of 2 membrane-embedded substrate-binding proteins (S component), 2 ATP-binding proteins (A component) and 2 transmembrane proteins (T component).

It localises to the cell membrane. ATP-binding (A) component of a common energy-coupling factor (ECF) ABC-transporter complex. Unlike classic ABC transporters this ECF transporter provides the energy necessary to transport a number of different substrates. This is Energy-coupling factor transporter ATP-binding protein EcfA1 from Streptococcus pyogenes serotype M12 (strain MGAS2096).